A 296-amino-acid polypeptide reads, in one-letter code: Enoyl-CoA hydratase AKT3-2 (296 aa).

The short motif at 294-296 (PKL) is the Peroxisomal targeting signal type 1 element.

This sequence belongs to the enoyl-CoA hydratase/isomerase family.

Its subcellular location is the peroxisome. It carries out the reaction a (3S)-3-hydroxyacyl-CoA = a (2E)-enoyl-CoA + H2O. The enzyme catalyses a 4-saturated-(3S)-3-hydroxyacyl-CoA = a (3E)-enoyl-CoA + H2O. Its pathway is mycotoxin biosynthesis. Functionally, enoyl-CoA hydratase; part of the gene clusters that mediate the biosynthesis of the host-selective toxins (HSTs) AK-toxins responsible for Japanese pear black spot disease by the Japanese pear pathotype. AK-toxins are esters of 9,10-epoxy 8-hydroxy 9-methyldecatrienoic acid (EDA). On cellular level, AK-toxins affect plasma membrane of susceptible cells and cause a sudden increase in loss of K(+) after a few minutes of toxin treatment. The acyl-CoA ligase AKT1, the hydrolase AKT2 and enoyl-CoA hydratase AKT3 are all involved in the biosynthesis of the AK-, AF- and ACT-toxin common 9,10-epoxy-8-hydroxy-9-methyl-decatrienoic acid (EDA) structural moiety. Part of the EDA biosynthesis occurs in the peroxisome since these 3 enzymes are localized in peroxisomes. The exact roles of the 3 enzymes, as well as of additional AK-toxin clusters enzymes, including AKT4, AKT6 and AKTS1, have still to be elucidated. The Cytochrome P450 monooxygenase AKT7 on the other side functions to limit production of EDA and AK-toxin, probably via the catalysis of a side reaction of EDA or its precursor. This chain is Enoyl-CoA hydratase AKT3-2, found in Alternaria alternata (Alternaria rot fungus).